A 223-amino-acid polypeptide reads, in one-letter code: Adapter protein MecA (223 aa).

Belongs to the MecA family. In terms of assembly, homodimer.

Enables the recognition and targeting of unfolded and aggregated proteins to the ClpC protease or to other proteins involved in proteolysis. The protein is Adapter protein MecA of Limosilactobacillus reuteri (strain DSM 20016) (Lactobacillus reuteri).